A 113-amino-acid polypeptide reads, in one-letter code: Hydrogenase maturation factor HypA (113 aa).

Residue His-2 coordinates Ni(2+). Zn(2+) contacts are provided by Cys-73, Cys-76, Cys-89, and Cys-92.

This sequence belongs to the HypA/HybF family.

Involved in the maturation of [NiFe] hydrogenases. Required for nickel insertion into the metal center of the hydrogenase. The polypeptide is Hydrogenase maturation factor HypA (Paracoccus denitrificans (strain Pd 1222)).